A 400-amino-acid chain; its full sequence is Unsaturated glucuronyl hydrolase (400 aa).

Residues 1-20 form the signal peptide; sequence MRKLVYLVLVLGLTFLNVRC. Residue aspartate 120 is the Nucleophile of the active site. Aspartate 181 serves as the catalytic Proton donor.

Belongs to the glycosyl hydrolase 88 family.

Its subcellular location is the cell surface. Its function is as follows. Unsaturated glucuronyl hydrolase involved in ulvan degradation. Ulvan is the main polysaccharide component of the Ulvales (green seaweed) cell wall. It is composed of disaccharide building blocks comprising 3-sulfated rhamnose (Rha3S) linked to D-glucuronic acid (GlcA), L-iduronic acid (IduA), or D-xylose (Xyl). Unsaturated glucuronyl hydrolase catalyzes the cleavage of the unsaturated 4-deoxy-L-threo-hex-4-enopyranosiduronic acid (deltaUA) at the non-reducing end of ulvan oligomers, thus forming 5-dehydro-4-deoxy-D-glucuronate. The chain is Unsaturated glucuronyl hydrolase from Formosa agariphila (strain DSM 15362 / KCTC 12365 / LMG 23005 / KMM 3901 / M-2Alg 35-1).